The chain runs to 391 residues: Digeranylgeranylglycerophospholipid reductase (391 aa).

FAD contacts are provided by G19, D38, C49, A50, A52, R99, V123, D279, G291, and I292. V369 is a binding site for a 2,3-bis-O-(geranylgeranyl)-sn-glycerol 1-phospholipid.

The protein belongs to the geranylgeranyl reductase family. DGGGPL reductase subfamily. The cofactor is FAD.

The catalysed reaction is a 2,3-bis-O-phytanyl-sn-glycerol 1-phospholipid + 8 A = a 2,3-bis-O-(geranylgeranyl)-sn-glycerol 1-phospholipid + 8 AH2. It carries out the reaction 2,3-bis-O-(phytanyl)-sn-glycerol 1-phosphate + 8 A = 2,3-bis-O-(geranylgeranyl)-sn-glycerol 1-phosphate + 8 AH2. It catalyses the reaction CDP-2,3-bis-O-(geranylgeranyl)-sn-glycerol + 8 AH2 = CDP-2,3-bis-O-(phytanyl)-sn-glycerol + 8 A. The enzyme catalyses archaetidylserine + 8 AH2 = 2,3-bis-O-phytanyl-sn-glycero-3-phospho-L-serine + 8 A. Its pathway is membrane lipid metabolism; glycerophospholipid metabolism. Is involved in the reduction of 2,3-digeranylgeranylglycerophospholipids (unsaturated archaeols) into 2,3-diphytanylglycerophospholipids (saturated archaeols) in the biosynthesis of archaeal membrane lipids. Catalyzes the formation of archaetidic acid (2,3-di-O-phytanyl-sn-glyceryl phosphate) from 2,3-di-O-geranylgeranylglyceryl phosphate (DGGGP) via the hydrogenation of each double bond of the isoprenoid chains. Is also probably able to reduce double bonds of geranyl groups in CDP-2,3-bis-O-(geranylgeranyl)-sn-glycerol and archaetidylserine, thus acting at various stages in the biosynthesis of archaeal membrane lipids. The chain is Digeranylgeranylglycerophospholipid reductase from Methanococcus aeolicus (strain ATCC BAA-1280 / DSM 17508 / OCM 812 / Nankai-3).